The chain runs to 216 residues: Orotate phosphoribosyltransferase (216 aa).

Residue Lys30 coordinates 5-phospho-alpha-D-ribose 1-diphosphate. Position 38 to 39 (38 to 39 (FF)) interacts with orotate. 5-phospho-alpha-D-ribose 1-diphosphate-binding positions include 75–76 (YK), Arg102, Lys103, Lys106, His108, and 128–136 (DDVITAGTA). Orotate is bound by residues Thr132 and Arg160.

This sequence belongs to the purine/pyrimidine phosphoribosyltransferase family. PyrE subfamily. Homodimer. It depends on Mg(2+) as a cofactor.

It catalyses the reaction orotidine 5'-phosphate + diphosphate = orotate + 5-phospho-alpha-D-ribose 1-diphosphate. The protein operates within pyrimidine metabolism; UMP biosynthesis via de novo pathway; UMP from orotate: step 1/2. In terms of biological role, catalyzes the transfer of a ribosyl phosphate group from 5-phosphoribose 1-diphosphate to orotate, leading to the formation of orotidine monophosphate (OMP). The protein is Orotate phosphoribosyltransferase of Acinetobacter baumannii (strain AB307-0294).